We begin with the raw amino-acid sequence, 288 residues long: UDP-3-O-acyl-N-acetylglucosamine deacetylase (288 aa).

Positions 79, 236, and 240 each coordinate Zn(2+). His-263 serves as the catalytic Proton donor.

It belongs to the LpxC family. It depends on Zn(2+) as a cofactor.

It catalyses the reaction a UDP-3-O-[(3R)-3-hydroxyacyl]-N-acetyl-alpha-D-glucosamine + H2O = a UDP-3-O-[(3R)-3-hydroxyacyl]-alpha-D-glucosamine + acetate. Its pathway is glycolipid biosynthesis; lipid IV(A) biosynthesis; lipid IV(A) from (3R)-3-hydroxytetradecanoyl-[acyl-carrier-protein] and UDP-N-acetyl-alpha-D-glucosamine: step 2/6. Catalyzes the hydrolysis of UDP-3-O-myristoyl-N-acetylglucosamine to form UDP-3-O-myristoylglucosamine and acetate, the committed step in lipid A biosynthesis. This Rickettsia felis (strain ATCC VR-1525 / URRWXCal2) (Rickettsia azadi) protein is UDP-3-O-acyl-N-acetylglucosamine deacetylase.